Consider the following 1379-residue polypeptide: DNA-directed RNA polymerase subunit beta (1379 aa).

The protein belongs to the RNA polymerase beta chain family. The RNAP catalytic core consists of 2 alpha, 1 beta, 1 beta' and 1 omega subunit. When a sigma factor is associated with the core the holoenzyme is formed, which can initiate transcription.

It carries out the reaction RNA(n) + a ribonucleoside 5'-triphosphate = RNA(n+1) + diphosphate. In terms of biological role, DNA-dependent RNA polymerase catalyzes the transcription of DNA into RNA using the four ribonucleoside triphosphates as substrates. The chain is DNA-directed RNA polymerase subunit beta from Campylobacter fetus subsp. fetus (strain 82-40).